Consider the following 436-residue polypeptide: Phosphoribosylamine--glycine ligase (436 aa).

One can recognise an ATP-grasp domain in the interval 106-318; it reads RKLFEDYDIE…LADVCQAIVD (213 aa). Position 133 to 196 (133 to 196) interacts with ATP; sequence LDDFDRDVVV…EERLIGEEFT (64 aa). Mg(2+)-binding residues include Q276, E288, and N290. Q276, E288, and N290 together coordinate Mn(2+).

It belongs to the GARS family. The cofactor is Mg(2+). Mn(2+) serves as cofactor.

The enzyme catalyses 5-phospho-beta-D-ribosylamine + glycine + ATP = N(1)-(5-phospho-beta-D-ribosyl)glycinamide + ADP + phosphate + H(+). Its pathway is purine metabolism; IMP biosynthesis via de novo pathway; N(1)-(5-phospho-D-ribosyl)glycinamide from 5-phospho-alpha-D-ribose 1-diphosphate: step 2/2. The chain is Phosphoribosylamine--glycine ligase from Methanobrevibacter smithii (strain ATCC 35061 / DSM 861 / OCM 144 / PS).